The sequence spans 404 residues: uncharacterized protein (404 aa).

11 consecutive transmembrane segments (helical) span residues 9–29 (IYLIGELSAKCVPFLLLPYLS), 36–56 (GFGELSYYQTFLPLFVIFIGL), 76–96 (LVVKTGYAYTLSIGGLGLLFC), 103–123 (IMFYLVLSAIFQVFLSVQLSI), 135–155 (FIQVSSTITNAALTILMLEFY), 162–182 (KRILAILISNVFVALLSYLIY), 199–219 (AFFYIMSFGFLMIFHHGSFFI), 236–256 (LGLYAMGAQIAFILSVFILAI), 288–308 (IVPIPSLVTLIVPEQWLLFFL), 319–339 (IIVFLLSTSLTIPYLFLVNYL), and 366–386 (LIFTDVVYIPYASVLGALGIL).

It belongs to the polysaccharide synthase family. HI_0867/HI_1700 subfamily.

It is found in the cell membrane. This is an uncharacterized protein from Haemophilus influenzae (strain ATCC 51907 / DSM 11121 / KW20 / Rd).